The following is a 343-amino-acid chain: Dual oxidase maturation factor 1 (343 aa).

Over 1–24 the chain is Extracellular; it reads MATLGHTFPFYAGPKPTFPMDTTL. A helical membrane pass occupies residues 25–45; the sequence is ASIIMIFLTALATFIVILPGI. At 46–51 the chain is on the cytoplasmic side; the sequence is RGKTRL. The chain crosses the membrane as a helical span at residues 52–72; it reads FWLLRVVTSLFIGAAILAVNF. The Extracellular segment spans residues 73 to 183; the sequence is SSEWSVGQVS…RLAGHYTSAM (111 aa). 3 N-linked (GlcNAc...) asparagine glycosylation sites follow: Asn-84, Asn-109, and Asn-121. A helical transmembrane segment spans residues 184 to 204; it reads LWVAFLCWLLANVMLSMPVLV. Topologically, residues 205-206 are cytoplasmic; sequence YG. Residues 207 to 227 form a helical membrane-spanning segment; sequence GYMLLATGIFQLLALLFFSMA. Residues 228-249 are Extracellular-facing; that stretch reads TSLTSPCPLHLGASVLHTHHGP. Residues 250-270 form a helical membrane-spanning segment; the sequence is AFWITLTTGLLCVLLGLAMAV. Topologically, residues 271–343 are cytoplasmic; it reads AHRMQPHRLK…AHPKDPDCAL (73 aa). The tract at residues 306 to 343 is disordered; it reads RYRSMADSPKSQDIPLSEASSTKAYCKEAHPKDPDCAL. The span at 330-343 shows a compositional bias: basic and acidic residues; that stretch reads YCKEAHPKDPDCAL.

Belongs to the DUOXA family. May interact with NUMB. In terms of tissue distribution, specifically expressed in thyroid gland. Also detected in esophagus.

It localises to the membrane. Functionally, may be required for the maturation and the transport from the endoplasmic reticulum to the plasma membrane of functional DUOX1. The polypeptide is Dual oxidase maturation factor 1 (DUOXA1) (Homo sapiens (Human)).